Consider the following 336-residue polypeptide: tRNA N6-adenosine threonylcarbamoyltransferase (336 aa).

Fe cation contacts are provided by H112 and H116. Substrate-binding positions include 136–140, D169, G182, and N276; that span reads LVSGG. Residue D304 coordinates Fe cation.

This sequence belongs to the KAE1 / TsaD family. It depends on Fe(2+) as a cofactor.

The protein resides in the cytoplasm. It carries out the reaction L-threonylcarbamoyladenylate + adenosine(37) in tRNA = N(6)-L-threonylcarbamoyladenosine(37) in tRNA + AMP + H(+). Its function is as follows. Required for the formation of a threonylcarbamoyl group on adenosine at position 37 (t(6)A37) in tRNAs that read codons beginning with adenine. Is involved in the transfer of the threonylcarbamoyl moiety of threonylcarbamoyl-AMP (TC-AMP) to the N6 group of A37, together with TsaE and TsaB. TsaD likely plays a direct catalytic role in this reaction. In Francisella philomiragia subsp. philomiragia (strain ATCC 25017 / CCUG 19701 / FSC 153 / O#319-036), this protein is tRNA N6-adenosine threonylcarbamoyltransferase.